Consider the following 433-residue polypeptide: uncharacterized protein (433 aa).

The methylglyoxal synthase stretch occupies residues 1–126 (MAAHIALIAH…VIKLLGKTKT (126 aa)). The 145-residue stretch at 1 to 145 (MAAHIALIAH…GQGNVERELD (145 aa)) folds into the MGS-like domain. Residue Asp-62 is part of the active site. In terms of domain architecture, DAGKc spans 127 to 262 (GHLIFNPVAG…VDTALCNDIP (136 aa)).

In the N-terminal section; belongs to the methylglyoxal synthase family.

This is an uncharacterized protein from Synechocystis sp. (strain ATCC 27184 / PCC 6803 / Kazusa).